A 1935-amino-acid polypeptide reads, in one-letter code: MVDAEMAAFGEAAPYLRKSEKERLEAQTRPFDLKKDVYVPDDKEEFVKAKILSREGGKVTAETEHGKTVTVKEDQVLQQNPPKFDKIEDMAMLTFLHEPAVLYNLKERYASWMIYTYSGLFCVTINPYKWLPVYNAEVVAAYRGKKRSEAPPHIFSISDNAYQYMLTDRENQSILITGESGAGKTVNTKRVIQYFAVIAAIGDRSKKEQTPGKGTLEDQIIQANPALEAFGNAKTVRNDNSSRFGKFIRIHFGATGKLASADIETYLLEKSRVIFQLKAERDYHIFYQILSNKKPELLDMLLITNNPYDYAFISQGETTVASIDDAEELMATDNAFDVLGFTSEEKNSMYKLTGAIMHFGNMKFKLKQREEQAEPDGTEEADKSAYLMGLNSADLLKGLCHPRVKVGNEYVTKGQNVQQVMYATGALAKAVYEKMFNWMVTRINTTLETKQPRQYFIGVLDIAGFEIFDFNSFEQLCINFTNEKLQQFFNHHMFVLEQEEYKKEGIEWEFIDFGMDLQACIDLIEKPMGIMSILEEECMFPKATDMTFKAKLYDNHLGKSNNFQKPRNIKGRPEAHFALIHYAGTVDYNIIGWLQKNKDPLNETVVDLYKKSSLKLLSNLFANYAGADTPVEKGKGKAKKGSSFQTVSALHRENLNKLMTNLRSTHPHFVRCIIPNETKSPGVIDNPLVMHQLRCNGVLEGIRICRKGFPNRILYGDFRQRYRILNPAAIPEGQFIDSRKGAEKLLGSLDIDHNQYKFGHTKVFFKAGLLGLLEEMRDERLSRIITRIQAQSRGVLSRMEFKKLLERRDSLLIIQWNIRAFMSVKNWPWMKLYFKIKPLLKSAETEKEMATMKEEFGRLKEALEKSEARRKELEEKMVSLLQEKNDLQLQVQAEQDNLADAEERCDQLIKNKIQLEAKVKEMTERLEDEEEMNAELTAKKRKLEDECSELKRDIDDLELTLAKVEKEKHATENKVKNLTEEMAGLDEIIAKLTKEKKALQEAHQQALDDLQAEEDKVNTLTKAKVKLEQHVDDLEGSLEQEKKVRMDLERAKRKLEGDLKLTQESIMDLENDKQQLDERLKKKDFELNALNARIEDEQALGSQLQKKLKELQARIEELEEELEAERTARAKVEKLRSDLSRELEEISERLEEAGGATSVQIEMNKKREAEFQKMRRDLEEATLQHEATAAALRKKHADSVAELGEQIDNLQRVKQKLEKEKSEFKLELDDVTSNMEQIIKAKANLEKMCRTLEDQMNEHRSKAEETQRSVNDLTSQRAKLQTENGELSRQLDEKEALISQLTRGKLTYTQQLEDLKRQLEEEVKAKNALAHALQSARHDCDLLREQYEEETEAKAELQRVLSKANSEVAQWRTKYETDAIQRTEELEEAKKKLAQRLQDAEEAVEAVNAKCSSLEKTKHRLQNEIEDLMVDVERSNAAAAALDKKQRNFDKILAEWKQKYEESQSELESSQKEARSLSTELFKLKNAYEESLEHLETFKRENKNLQEEISDLTEQLGSSGKTIHELEKVRKQLEAEKLELQSALEEAEASLEHEEGKILRAQLEFNQIKAEMERKLAEKDEEMEQAKRNHLRVVDSLQTSLDAETRSRNEALRVKKKMEGDLNEMEIQLSHANRMAAEAQKQVKSLQSLLKDTQIQLDDAVRANDDLKENIAIVERRNNLLQAELEELRAVVEQTERSRKLAEQELIETSERVQLLHSQNTSLINQKKKMEADLSQLQTEVEEAVQECRNAEEKAKKAITDAAMMAEELKKEQDTSAHLERMKKNMEQTIKDLQHRLDEAEQIALKGGKKQLQKLEARVRELENELEAEQKRNAESVKGMRKSERRIKELTYQTEEDRKNLLRLQDLVDKLQLKVKAYKRQAEEAEEQANTNLSKFRKVQHELDEAEERADIAESQVNKLRAKSRDIGTKGLNEE.

One can recognise a Myosin N-terminal SH3-like domain in the interval Asp-32–Pro-81. Positions Asp-85–Asp-778 constitute a Myosin motor domain. Lys-129 carries the post-translational modification N6,N6,N6-trimethyllysine. Gly-178–Thr-185 serves as a coordination point for ATP. Thr-378 is subject to Phosphothreonine. Actin-binding stretches follow at residues Leu-655 to Glu-677 and Lys-757 to Gly-771. The IQ domain occupies Leu-781–Ser-810. Positions Leu-839 to Glu-1935 form a coiled coil. 2 positions are modified to phosphoserine: Ser-1137 and Ser-1269. A Phosphothreonine modification is found at Thr-1282. A Phosphotyrosine modification is found at Tyr-1308. Thr-1309 is subject to Phosphothreonine. Position 1510 is a phosphoserine (Ser-1510). Thr-1513 is subject to Phosphothreonine. Residues Glu-1907–Glu-1935 are disordered. The span at Lys-1923 to Glu-1935 shows a compositional bias: basic and acidic residues.

It belongs to the TRAFAC class myosin-kinesin ATPase superfamily. Myosin family. In terms of assembly, muscle myosin is a hexameric protein that consists of 2 heavy chain subunits (MHC), 2 alkali light chain subunits (MLC) and 2 regulatory light chain subunits (MLC-2). Interacts with ECPAS. Interacts (via C-terminus) with LRRC39.

The protein localises to the cytoplasm. Its subcellular location is the myofibril. It localises to the sarcomere. Its function is as follows. Myosins are actin-based motor molecules with ATPase activity essential for muscle contraction. Forms regular bipolar thick filaments that, together with actin thin filaments, constitute the fundamental contractile unit of skeletal and cardiac muscle. The protein is Myosin-7 (MYH7) of Sus scrofa (Pig).